The following is a 266-amino-acid chain: Interleukin-33 (266 aa).

Positions 1–67 are homeodomain-like HTH domain; that stretch reads MRPRMKYSNS…ETSYFRKEPT (67 aa). The propeptide occupies 1–101; that stretch reads MRPRMKYSNS…RSLLGSIQAF (101 aa). The interval 66 to 108 is interaction with RELA; sequence PTKRYSLKSGTKHEENFSAYPRDSRKRSLLGSIQAFAASVDTL.

This sequence belongs to the IL-1 family. Highly divergent. As to quaternary structure, (Microbial infection) Interacts (in reduced form) with H.polygyrus ARI; the interaction abolishes the interaction with its primary receptor IL1RL1. Forms a 1:1:1 heterotrimeric complex with its primary high-affinity receptor IL1RL1 and the coreceptor IL1RAP. Interacts with cargo receptor TMED10; the interaction mediates the translocation from the cytoplasm into the ERGIC (endoplasmic reticulum-Golgi intermediate compartment) and thereby secretion. The full-length protein can be released from cells and is able to signal via the IL1RL1/ST2 receptor. However, proteolytic processing by CELA1, CSTG/cathepsin G and ELANE/neutrophil elastase produces C-terminal peptides that are more active than the unprocessed full-length protein. May also be proteolytically processed by calpains. Proteolytic cleavage mediated by apoptotic caspases including CASP3 and CASP7 results in IL33 inactivation. In vitro proteolytic cleavage by CASP1 was reported but could not be confirmed in vivo suggesting that IL33 is probably not a direct substrate for that caspase.

Its subcellular location is the nucleus. The protein resides in the chromosome. It localises to the cytoplasm. It is found in the cytoplasmic vesicle. The protein localises to the secretory vesicle. Its subcellular location is the secreted. Its function is as follows. Cytokine that binds to and signals through the IL1RL1/ST2 receptor which in turn activates NF-kappa-B and MAPK signaling pathways in target cells. Involved in the maturation of Th2 cells inducing the secretion of T-helper type 2-associated cytokines. Also involved in activation of mast cells, basophils, eosinophils and natural killer cells. Acts as an enhancer of polarization of alternatively activated macrophages. Acts as a chemoattractant for Th2 cells, and may function as an 'alarmin', that amplifies immune responses during tissue injury. Induces rapid UCP2-dependent mitochondrial rewiring that attenuates the generation of reactive oxygen species and preserves the integrity of Krebs cycle required for persistent production of itaconate and subsequent GATA3-dependent differentiation of inflammation-resolving alternatively activated macrophages. In quiescent endothelia the uncleaved form is constitutively and abundantly expressed, and acts as a chromatin-associated nuclear factor with transcriptional repressor properties, it may sequester nuclear NF-kappaB/RELA, lowering expression of its targets. This form is rapidely lost upon angiogenic or pro-inflammatory activation. The chain is Interleukin-33 from Mus musculus (Mouse).